The following is a 197-amino-acid chain: Glycerol-3-phosphate acyltransferase (197 aa).

5 consecutive transmembrane segments (helical) span residues Met-1–Ile-21, Leu-50–Ala-70, Ile-82–Phe-102, Leu-112–Ala-132, and Gly-159–His-179.

This sequence belongs to the PlsY family. Probably interacts with PlsX.

The protein localises to the cell inner membrane. The catalysed reaction is an acyl phosphate + sn-glycerol 3-phosphate = a 1-acyl-sn-glycero-3-phosphate + phosphate. It participates in lipid metabolism; phospholipid metabolism. Catalyzes the transfer of an acyl group from acyl-phosphate (acyl-PO(4)) to glycerol-3-phosphate (G3P) to form lysophosphatidic acid (LPA). This enzyme utilizes acyl-phosphate as fatty acyl donor, but not acyl-CoA or acyl-ACP. This Desulfotalea psychrophila (strain LSv54 / DSM 12343) protein is Glycerol-3-phosphate acyltransferase.